Reading from the N-terminus, the 293-residue chain is Ribosomal protein L11 methyltransferase (293 aa).

4 residues coordinate S-adenosyl-L-methionine: threonine 145, glycine 166, aspartate 188, and asparagine 230.

The protein belongs to the methyltransferase superfamily. PrmA family.

The protein localises to the cytoplasm. The catalysed reaction is L-lysyl-[protein] + 3 S-adenosyl-L-methionine = N(6),N(6),N(6)-trimethyl-L-lysyl-[protein] + 3 S-adenosyl-L-homocysteine + 3 H(+). Functionally, methylates ribosomal protein L11. The chain is Ribosomal protein L11 methyltransferase from Actinobacillus pleuropneumoniae serotype 5b (strain L20).